Here is a 343-residue protein sequence, read N- to C-terminus: Transmembrane protein 120A (343 aa).

The Cytoplasmic portion of the chain corresponds to 1-132 (MQSPPPDPLG…KQAKFAYKDE (132 aa)). Residue Lys130 coordinates CoA. Residues 133 to 152 (YEKFKLYLTIILIVISFTCR) traverse the membrane as a helical segment. Over 153 to 158 (FLLNSR) the chain is Extracellular. Residues 159–177 (VTDAAFNFLLVWYYCTLTI) traverse the membrane as a helical segment. The Cytoplasmic portion of the chain corresponds to 178–190 (RESILINNGSRIK). Residues Ser187 and Arg188 each coordinate CoA. Residues 191–209 (GWWVFHHYVSTFLSGVMLT) traverse the membrane as a helical segment. Residues 210–218 (WPDGLMYQK) lie on the Extracellular side of the membrane. Residues 219–240 (FRNQFLSFSMYQSFVQFLQYYY) traverse the membrane as a helical segment. Residues Gln237, Tyr240, Gln241, and His283 each contribute to the CoA site. Residues 241-270 (QSGCLYRLRALGERHTMDLTVEGFQSWMWR) lie on the Cytoplasmic side of the membrane. Residues 271 to 294 (GLTFLLPFLFFGHFWQLFNALTLF) form a helical membrane-spanning segment. The Extracellular portion of the chain corresponds to 295 to 304 (NLARDPECKE). A helical transmembrane segment spans residues 305 to 330 (WQVLMCGLPFLLLFLGNFFTTLRVVH). The Cytoplasmic portion of the chain corresponds to 331–343 (QKFHSQQHGSKKD). Position 332 (Lys332) interacts with CoA.

Belongs to the TMEM120 family. In terms of assembly, homodimer. Forms heterooligomer with TMEM120B. Interacts with PKD2; TMEM120A inhibits PKD2 channel activity through the physical association of PKD2 with TMEM120A.

It localises to the cell membrane. The protein localises to the nucleus inner membrane. Its subcellular location is the endoplasmic reticulum. Its function is as follows. Multifunctional protein involved in mechanosensation, and plays an essential role in lipid metabolism and adipocyte differentiation. May function as a potential ion channel involved in sensing mechanical stimuli. Mediates the mechanosensitivity of the PKD2-TMEM120A channel complex through direct physical interaction. TMEM120A seems to affect mechanosensation by inhibiting PIEZO2 channels, possibly by altering cellular lipid content. TMEM120A is structurally similar to a lipid-modifying enzyme, ELOVL7, and contains a bound coenzyme A molecule, which suggests it might function as an enzyme in lipid metabolism. Additionnaly, implicated in innate immune response against Zika virus. Acts as a key activator of the antiviral signaling involving STING1. This chain is Transmembrane protein 120A, found in Rattus norvegicus (Rat).